The primary structure comprises 405 residues: DNA polymerase processivity factor (405 aa).

A disordered region spans residues 354–376 (GAGVKRRASEEEESDQPPKKLFP). The short motif at 358 to 373 (KRRASEEEESDQPPKK) is the Bipartite nuclear localization signal element.

The protein belongs to the herpesviridae DNA polymerase processivity factor family. Interacts with the DNA polymerase catalytic subunit. Interacts with the origin-binding protein.

It is found in the host nucleus. Functionally, plays an essential role in viral DNA replication by acting as the polymerase accessory subunit. Associates with the viral polymerase to increase its processivity and forms high-affinity direct interactions with DNA. Facilitates the origin-binding protein loading onto DNA thus increasing its ability to assemble into a functional complex capable of unwinding duplex DNA. This is DNA polymerase processivity factor from Equine herpesvirus 1 (strain Ab4p) (EHV-1).